Here is a 351-residue protein sequence, read N- to C-terminus: N(4)-bis(aminopropyl)spermidine synthase (351 aa).

Belongs to the branched-chain polyamine synthase family.

The protein localises to the cytoplasm. The catalysed reaction is 2 S-adenosyl 3-(methylsulfanyl)propylamine + spermidine = N(4)-bis(aminopropyl)spermidine + 2 S-methyl-5'-thioadenosine + 2 H(+). It functions in the pathway amine and polyamine biosynthesis. Involved in the biosynthesis of branched-chain polyamines, which support the growth of thermophiles under high-temperature conditions. Catalyzes the sequential condensation of spermidine with the aminopropyl groups of decarboxylated S-adenosylmethionines to produce N(4)-bis(aminopropyl)spermidine via N(4)-aminopropylspermidine. Can also use spermine to produce N(4)-aminopropylspermine. This is N(4)-bis(aminopropyl)spermidine synthase from Thermococcus kodakarensis (strain ATCC BAA-918 / JCM 12380 / KOD1) (Pyrococcus kodakaraensis (strain KOD1)).